We begin with the raw amino-acid sequence, 691 residues long: DNA ligase (691 aa).

NAD(+) is bound by residues 41–45 (DAEFD), 91–92 (SL), and glutamate 121. Lysine 123 acts as the N6-AMP-lysine intermediate in catalysis. NAD(+) is bound by residues arginine 144, glutamate 184, lysine 300, and lysine 324. Residues cysteine 418, cysteine 421, cysteine 437, and cysteine 443 each coordinate Zn(2+). Residues 607–691 (SVPRTLAGLT…LLADGPASRT (85 aa)) enclose the BRCT domain.

Belongs to the NAD-dependent DNA ligase family. LigA subfamily. Mg(2+) is required as a cofactor. Mn(2+) serves as cofactor.

The catalysed reaction is NAD(+) + (deoxyribonucleotide)n-3'-hydroxyl + 5'-phospho-(deoxyribonucleotide)m = (deoxyribonucleotide)n+m + AMP + beta-nicotinamide D-nucleotide.. Its function is as follows. DNA ligase that catalyzes the formation of phosphodiester linkages between 5'-phosphoryl and 3'-hydroxyl groups in double-stranded DNA using NAD as a coenzyme and as the energy source for the reaction. It is essential for DNA replication and repair of damaged DNA. The chain is DNA ligase from Mycobacterium tuberculosis (strain ATCC 25177 / H37Ra).